Here is a 1275-residue protein sequence, read N- to C-terminus: Serine/threonine-protein kinase ULK4 (1275 aa).

A Protein kinase domain is found at 4 to 280 (FILYEEIGRG…WTRLLQHSFW (277 aa)). Catalysis depends on Asp121, which acts as the Proton acceptor. 2 disordered regions span residues 299–346 (SRNT…EFRP) and 359–393 (FLLS…SPLT). A compositionally biased stretch (basic and acidic residues) spans 336-346 (FRLENPTEFRP). Polar residues-rich tracts occupy residues 363-373 (SRPTPRTSTAV) and 384-393 (CSPQKTSPLT). 6 HEAT repeats span residues 727-765 (LIQE…YNRE), 842-880 (LKMC…ILSH), 926-964 (STVV…LLVN), 1025-1063 (LVEE…NLVA), 1151-1189 (NRPL…LYGG), and 1213-1253 (PKEQ…LAPG).

The protein belongs to the protein kinase superfamily. Ser/Thr protein kinase family. APG1/unc-51/ULK1 subfamily.

The catalysed reaction is L-seryl-[protein] + ATP = O-phospho-L-seryl-[protein] + ADP + H(+). It catalyses the reaction L-threonyl-[protein] + ATP = O-phospho-L-threonyl-[protein] + ADP + H(+). In terms of biological role, may be involved in the remodeling of cytoskeletal components, such as alpha-tubulin, and in this way regulates neurite branching and elongation, as well as cell motility. This is Serine/threonine-protein kinase ULK4 (ULK4) from Pongo abelii (Sumatran orangutan).